We begin with the raw amino-acid sequence, 506 residues long: GMP synthase [glutamine-hydrolyzing] (506 aa).

A Glutamine amidotransferase type-1 domain is found at 3–188 (GFVILDFGSQ…AQGMCKAPAD (186 aa)). Catalysis depends on cysteine 80, which acts as the Nucleophile. Residues histidine 162 and glutamate 164 contribute to the active site. The GMPS ATP-PPase domain maps to 189-381 (WDAPHIKDIL…LGLPKEMLWR (193 aa)). 217–223 (SGGVDST) provides a ligand contact to ATP.

As to quaternary structure, homodimer.

It catalyses the reaction XMP + L-glutamine + ATP + H2O = GMP + L-glutamate + AMP + diphosphate + 2 H(+). The protein operates within purine metabolism; GMP biosynthesis; GMP from XMP (L-Gln route): step 1/1. Functionally, catalyzes the synthesis of GMP from XMP. The polypeptide is GMP synthase [glutamine-hydrolyzing] (Bdellovibrio bacteriovorus (strain ATCC 15356 / DSM 50701 / NCIMB 9529 / HD100)).